A 194-amino-acid polypeptide reads, in one-letter code: Large ribosomal subunit protein eL15 (194 aa).

Residues 161 to 194 form a disordered region; it reads GLTSAGKKGRGLMYKGKGAEKARPSVRANGKKTK.

It belongs to the eukaryotic ribosomal protein eL15 family.

The sequence is that of Large ribosomal subunit protein eL15 from Methanococcus maripaludis (strain C5 / ATCC BAA-1333).